A 350-amino-acid polypeptide reads, in one-letter code: Methionine import ATP-binding protein MetN (350 aa).

In terms of domain architecture, ABC transporter spans 9 to 245 (LKDVDVEFHG…PQQQLTKDFI (237 aa)). Residue 43–50 (GYSGAGKS) participates in ATP binding.

This sequence belongs to the ABC transporter superfamily. Methionine importer (TC 3.A.1.24) family. As to quaternary structure, the complex is composed of two ATP-binding proteins (MetN), two transmembrane proteins (MetI) and a solute-binding protein (MetQ).

Its subcellular location is the cell membrane. It catalyses the reaction L-methionine(out) + ATP + H2O = L-methionine(in) + ADP + phosphate + H(+). The enzyme catalyses D-methionine(out) + ATP + H2O = D-methionine(in) + ADP + phosphate + H(+). In terms of biological role, part of the ABC transporter complex MetNIQ involved in methionine import. Responsible for energy coupling to the transport system. The protein is Methionine import ATP-binding protein MetN of Lacticaseibacillus paracasei (strain ATCC 334 / BCRC 17002 / CCUG 31169 / CIP 107868 / KCTC 3260 / NRRL B-441) (Lactobacillus paracasei).